Reading from the N-terminus, the 68-residue chain is Large ribosomal subunit protein bL33c (68 aa).

The protein belongs to the bacterial ribosomal protein bL33 family.

The protein localises to the plastid. The polypeptide is Large ribosomal subunit protein bL33c (Cuscuta exaltata (Tall dodder)).